The chain runs to 528 residues: Ceramide glucosyltransferase (528 aa).

Residues 1-6 (MYSFIE) are Lumenal-facing. Residues 7–27 (CIAGALFVLGCVVVTLVVIGV) traverse the membrane as a helical segment. The Cytoplasmic segment spans residues 28 to 369 (RALLYNFRNR…TVLSATILEP (342 aa)). Asp94 is a short sequence motif (D1). Residue Asp154 is a short sequence motif, D2. Position 308 (Asp308) is a short sequence motif, D3. Asp308 serves as the catalytic Proton acceptor. A (Q/R)XXRW motif is present at residues 349–353 (RRSRW). A helical transmembrane segment spans residues 370–390 (FTECFLFATYMSLAMTTIPVL). The Lumenal segment spans residues 391–402 (SQNLGIPKTWNA). A helical transmembrane segment spans residues 403 to 423 (TAIAWFTITTLWMLIDYIGYL). Residues 424–457 (RLHSGVTMEVDEHTPYFAKGFKNTGGIKRRPFLE) are Cytoplasmic-facing. The helical transmembrane segment at 458-478 (FLAAWIGREGLAFPVWAYAVV) threads the bilayer. Over 479 to 528 (FGNTVNWRGRLFYIHWDTTVDAVEPREERTREVRTPELERGPSRNKHRVD) the chain is Lumenal. A disordered region spans residues 503–528 (PREERTREVRTPELERGPSRNKHRVD).

Belongs to the glycosyltransferase 2 family.

The protein localises to the golgi apparatus membrane. The catalysed reaction is an N-acylsphing-4-enine + UDP-alpha-D-glucose = a beta-D-glucosyl-(1&lt;-&gt;1')-N-acylsphing-4-enine + UDP + H(+). The protein operates within lipid metabolism; sphingolipid metabolism. Functionally, catalyzes the final step in the biosynthesis of the membrane lipid glucosylceramide (GluCer), the transfer of glucose to ceramide. Glucosylceramides play important roles in growth, differentiation and pathogenicity. Contribution to fungal pathogenesis is host-dependent. The sequence is that of Ceramide glucosyltransferase from Gibberella zeae (strain ATCC MYA-4620 / CBS 123657 / FGSC 9075 / NRRL 31084 / PH-1) (Wheat head blight fungus).